The primary structure comprises 306 residues: Acetylglutamate kinase (306 aa).

Substrate-binding positions include 68-69, R90, and N195; that span reads GG.

It belongs to the acetylglutamate kinase family. ArgB subfamily.

It localises to the cytoplasm. The catalysed reaction is N-acetyl-L-glutamate + ATP = N-acetyl-L-glutamyl 5-phosphate + ADP. Its pathway is amino-acid biosynthesis; L-arginine biosynthesis; N(2)-acetyl-L-ornithine from L-glutamate: step 2/4. Catalyzes the ATP-dependent phosphorylation of N-acetyl-L-glutamate. The polypeptide is Acetylglutamate kinase (Chromohalobacter salexigens (strain ATCC BAA-138 / DSM 3043 / CIP 106854 / NCIMB 13768 / 1H11)).